We begin with the raw amino-acid sequence, 379 residues long: Cytochrome b (379 aa).

4 consecutive transmembrane segments (helical) span residues 33–53 (FGSLLGVCLMIQILTGLFLAM), 77–98 (WLIRYLHANGASMFFICLFIHV), 113–133 (WNIGIILFLTTMATAFVGYVL), and 178–198 (FFAFHFILPFIITAFALVHLL). 2 residues coordinate heme b: His83 and His97. Heme b-binding residues include His182 and His196. Residue His201 participates in a ubiquinone binding. Helical transmembrane passes span 226–246 (IKDLLGILLLLLALMILALFF), 288–308 (LGGVLALILSILILAAFPLLN), 320–340 (ITQTIYWTLIVNLLVLTWIGG), and 347–367 (FTTIGQIASITYFTTIIILMP).

This sequence belongs to the cytochrome b family. In terms of assembly, the cytochrome bc1 complex contains 11 subunits: 3 respiratory subunits (MT-CYB, CYC1 and UQCRFS1), 2 core proteins (UQCRC1 and UQCRC2) and 6 low-molecular weight proteins (UQCRH/QCR6, UQCRB/QCR7, UQCRQ/QCR8, UQCR10/QCR9, UQCR11/QCR10 and a cleavage product of UQCRFS1). This cytochrome bc1 complex then forms a dimer. It depends on heme b as a cofactor.

Its subcellular location is the mitochondrion inner membrane. Functionally, component of the ubiquinol-cytochrome c reductase complex (complex III or cytochrome b-c1 complex) that is part of the mitochondrial respiratory chain. The b-c1 complex mediates electron transfer from ubiquinol to cytochrome c. Contributes to the generation of a proton gradient across the mitochondrial membrane that is then used for ATP synthesis. This chain is Cytochrome b (MT-CYB), found in Akodon aerosus (Highland grass mouse).